We begin with the raw amino-acid sequence, 184 residues long: Orotate phosphoribosyltransferase (184 aa).

5-phospho-alpha-D-ribose 1-diphosphate is bound by residues arginine 99, lysine 100, lysine 103, histidine 105, and 125-133 (EDTTTTGNS). Orotate is bound by residues threonine 129 and arginine 157.

It belongs to the purine/pyrimidine phosphoribosyltransferase family. PyrE subfamily. As to quaternary structure, homodimer. The cofactor is Mg(2+).

The catalysed reaction is orotidine 5'-phosphate + diphosphate = orotate + 5-phospho-alpha-D-ribose 1-diphosphate. Its pathway is pyrimidine metabolism; UMP biosynthesis via de novo pathway; UMP from orotate: step 1/2. In terms of biological role, catalyzes the transfer of a ribosyl phosphate group from 5-phosphoribose 1-diphosphate to orotate, leading to the formation of orotidine monophosphate (OMP). In Corynebacterium glutamicum (strain ATCC 13032 / DSM 20300 / JCM 1318 / BCRC 11384 / CCUG 27702 / LMG 3730 / NBRC 12168 / NCIMB 10025 / NRRL B-2784 / 534), this protein is Orotate phosphoribosyltransferase.